Here is a 243-residue protein sequence, read N- to C-terminus: Small ribosomal subunit protein uS3 (243 aa).

In terms of domain architecture, KH type-2 spans 38 to 106 (IRKYLNARLA…DIQINIFEVK (69 aa)). Residues 217-243 (TQTKESGRGGNGNNNGGKNFKRKKNNR) are disordered.

Belongs to the universal ribosomal protein uS3 family. In terms of assembly, part of the 30S ribosomal subunit. Forms a tight complex with proteins S10 and S14.

Its function is as follows. Binds the lower part of the 30S subunit head. Binds mRNA in the 70S ribosome, positioning it for translation. The polypeptide is Small ribosomal subunit protein uS3 (Phocaeicola vulgatus (strain ATCC 8482 / DSM 1447 / JCM 5826 / CCUG 4940 / NBRC 14291 / NCTC 11154) (Bacteroides vulgatus)).